Consider the following 485-residue polypeptide: Glutamate--tRNA ligase (485 aa).

A 'HIGH' region motif is present at residues 11 to 21; sequence PSPTGHLHIGN. A 'KMSKS' region motif is present at residues 252-256; that stretch reads KLSKR. Residue Lys-255 coordinates ATP.

This sequence belongs to the class-I aminoacyl-tRNA synthetase family. Glutamate--tRNA ligase type 1 subfamily. Monomer.

Its subcellular location is the cytoplasm. The enzyme catalyses tRNA(Glu) + L-glutamate + ATP = L-glutamyl-tRNA(Glu) + AMP + diphosphate. In terms of biological role, catalyzes the attachment of glutamate to tRNA(Glu) in a two-step reaction: glutamate is first activated by ATP to form Glu-AMP and then transferred to the acceptor end of tRNA(Glu). The protein is Glutamate--tRNA ligase of Bacillus licheniformis (strain ATCC 14580 / DSM 13 / JCM 2505 / CCUG 7422 / NBRC 12200 / NCIMB 9375 / NCTC 10341 / NRRL NRS-1264 / Gibson 46).